The chain runs to 173 residues: uncharacterized protein (173 aa).

The helical transmembrane segment at 1 to 21 (MFIVFYLILIIFIFIYFHVYI) threads the bilayer.

The protein to T.pallidum TP0711.

The protein localises to the membrane. This is an uncharacterized protein from Borreliella burgdorferi (strain ATCC 35210 / DSM 4680 / CIP 102532 / B31) (Borrelia burgdorferi).